The primary structure comprises 509 residues: ATP synthase subunit alpha (509 aa).

169–176 serves as a coordination point for ATP; sequence GDRQTGKT.

Belongs to the ATPase alpha/beta chains family. In terms of assembly, F-type ATPases have 2 components, CF(1) - the catalytic core - and CF(0) - the membrane proton channel. CF(1) has five subunits: alpha(3), beta(3), gamma(1), delta(1), epsilon(1). CF(0) has three main subunits: a(1), b(2) and c(9-12). The alpha and beta chains form an alternating ring which encloses part of the gamma chain. CF(1) is attached to CF(0) by a central stalk formed by the gamma and epsilon chains, while a peripheral stalk is formed by the delta and b chains.

Its subcellular location is the cell inner membrane. It carries out the reaction ATP + H2O + 4 H(+)(in) = ADP + phosphate + 5 H(+)(out). Its function is as follows. Produces ATP from ADP in the presence of a proton gradient across the membrane. The alpha chain is a regulatory subunit. This Brucella melitensis biotype 1 (strain ATCC 23456 / CCUG 17765 / NCTC 10094 / 16M) protein is ATP synthase subunit alpha.